The chain runs to 397 residues: Potassium channel subfamily K member 4 (397 aa).

The Cytoplasmic segment spans residues 1 to 3 (MRS). Residues 4–24 (TTLLALLALVLLYLVSGALVF) form a helical membrane-spanning segment. Residues 25–88 (QALEQPHEQQ…WTNSSNHSSA (64 aa)) lie on the Extracellular side of the membrane. The N-linked (GlcNAc...) asparagine glycan is linked to N81. An intramembrane region (helical) is located at residues 89–103 (WNLGSAFFFSGTIIT). K(+)-binding residues include T104, I105, G106, and Y107. The selectivity filter 1 stretch occupies residues 104 to 109 (TIGYGN). Residues 104–110 (TIGYGNI) lie within the membrane without spanning it. The Extracellular portion of the chain corresponds to 111–118 (ALHTDAGR). Residues 119–151 (LFCIFYALVGIPLFGMLLAGVGDRLGSSLRRGI) form a helical membrane-spanning segment. At 152-173 (GHIEAVFLKWHVPPGLVRMLSA) the chain is on the cytoplasmic side. Residues 174 to 195 (VLFLLIGCLLFVLTPTFVFSYM) form a helical membrane-spanning segment. Residues 196–200 (ESWSK) are Extracellular-facing. Residues 201 to 214 (LEAIYFVIVTLTTV) constitute an intramembrane region (helical). The K(+) site is built by T213, V214, G215, and F216. The tract at residues 213-218 (TVGFGD) is selectivity filter 2. Residues 215 to 220 (GFGDYV) lie within the membrane without spanning it. At 221–234 (PGDGTGQNSPAYQP) the chain is on the extracellular side. The chain crosses the membrane as a helical span at residues 235–261 (LVWFWILFGLAYFASVLTTIGNWLRAV). The Cytoplasmic segment spans residues 262–397 (SRRTRAEMGG…GRLRDKAVPV (136 aa)). A compositionally biased stretch (polar residues) spans 282-292 (TVTARVTQRTG). The disordered stretch occupies residues 282 to 397 (TVTARVTQRT…GRLRDKAVPV (116 aa)). Residues 369–388 (PRGRRRPNPTKKPSRPRGPG) show a composition bias toward basic residues.

It belongs to the two pore domain potassium channel (TC 1.A.1.8) family. Homodimer; disulfide-linked. Forms heterodimers with other 2-pore domain K(+) channel subunits, such as KCNK2 and KCNK10. Detected in brain, and at much lower levels in liver, skeletal muscle and testis.

Its subcellular location is the cell membrane. The protein localises to the cell projection. It localises to the axon. It carries out the reaction K(+)(in) = K(+)(out). The catalysed reaction is Rb(+)(in) = Rb(+)(out). It catalyses the reaction Cs(+)(in) = Cs(+)(out). Its activity is regulated as follows. Activated by various stimuli including intracellular basic pH, mechanical stretch and heat and polyunsaturated fatty acids such as arachidonic acid. In terms of biological role, k(+) channel that conducts voltage-dependent outward rectifying currents upon membrane depolarization. Voltage sensing is coupled to K(+) electrochemical gradient in an 'ion flux gating' mode where outward but not inward ion flow opens the gate. Converts to voltage-independent 'leak' conductance mode upon stimulation by various stimuli including mechanical membrane stretch, basic pH, heat and lipids. Homo- and heterodimerizes to form functional channels with distinct regulatory and gating properties. At trigeminal A-beta afferent nerves, the heterodimer of KCNK2/TREK-1 and KCNK4/TRAAK is mostly coexpressed at nodes of Ranvier where it conducts voltage-independent mechanosensitive and thermosensitive currents, allowing rapid action potential repolarization, high speed and high frequence saltatory conduction on myelinated nerves to ensure prompt sensory responses. Permeable to other monovalent cations such as Rb(+) and Cs(+). This is Potassium channel subfamily K member 4 from Rattus norvegicus (Rat).